The primary structure comprises 494 residues: Aspartyl/glutamyl-tRNA(Asn/Gln) amidotransferase subunit B (494 aa).

Belongs to the GatB/GatE family. GatB subfamily. In terms of assembly, heterotrimer of A, B and C subunits.

It catalyses the reaction L-glutamyl-tRNA(Gln) + L-glutamine + ATP + H2O = L-glutaminyl-tRNA(Gln) + L-glutamate + ADP + phosphate + H(+). The catalysed reaction is L-aspartyl-tRNA(Asn) + L-glutamine + ATP + H2O = L-asparaginyl-tRNA(Asn) + L-glutamate + ADP + phosphate + 2 H(+). Functionally, allows the formation of correctly charged Asn-tRNA(Asn) or Gln-tRNA(Gln) through the transamidation of misacylated Asp-tRNA(Asn) or Glu-tRNA(Gln) in organisms which lack either or both of asparaginyl-tRNA or glutaminyl-tRNA synthetases. The reaction takes place in the presence of glutamine and ATP through an activated phospho-Asp-tRNA(Asn) or phospho-Glu-tRNA(Gln). This is Aspartyl/glutamyl-tRNA(Asn/Gln) amidotransferase subunit B from Synechococcus sp. (strain WH7803).